Reading from the N-terminus, the 248-residue chain is Tropomyosin alpha-4 chain (248 aa).

Position 2 is an N-acetylalanine (Ala2). Residues 2 to 248 (AGLNSLEAVK…DQTLDELNCI (247 aa)) adopt a coiled-coil conformation. Phosphoserine is present on Ser6. The tract at residues 16–47 (ALQQQADEAEDRAQGLQRELDGERERREKAEG) is disordered. A compositionally biased stretch (basic and acidic residues) spans 33–47 (RELDGERERREKAEG). An N6-acetyllysine mark is found at Lys177 and Lys215. The residue at position 216 (Thr216) is a Phosphothreonine.

The protein belongs to the tropomyosin family. In terms of assembly, homodimer. Heterodimer of an alpha (TPM1, TPM3 or TPM4) and a beta (TPM2) chain.

It is found in the cytoplasm. Its subcellular location is the cytoskeleton. Its function is as follows. Binds to actin filaments in muscle and non-muscle cells. Plays a central role, in association with the troponin complex, in the calcium dependent regulation of vertebrate striated muscle contraction. Smooth muscle contraction is regulated by interaction with caldesmon. In non-muscle cells is implicated in stabilizing cytoskeleton actin filaments. Binds calcium. The polypeptide is Tropomyosin alpha-4 chain (TPM4) (Equus caballus (Horse)).